The chain runs to 126 residues: Histone H2B type F-S (126 aa).

The span at 1 to 12 shows a compositional bias: low complexity; it reads MPEPAKSAPAPK. The disordered stretch occupies residues 1–36; it reads MPEPAKSAPAPKKGSKKAVTKAQKKDGRKRKRSRKE. The residue at position 2 (Pro2) is an N-acetylproline. ADP-ribosyl glutamic acid is present on Glu3. The residue at position 6 (Lys6) is an N6-(2-hydroxyisobutyryl)lysine; alternate. N6-(beta-hydroxybutyryl)lysine; alternate is present on Lys6. At Lys6 the chain carries N6-acetyllysine; alternate. Lys6 bears the N6-butyryllysine; alternate mark. The residue at position 6 (Lys6) is an N6-crotonyllysine; alternate. Residue Lys6 is modified to N6-lactoyllysine; alternate. Lys6 is covalently cross-linked (Glycyl lysine isopeptide (Lys-Gly) (interchain with G-Cter in SUMO2); alternate). At Ser7 the chain carries ADP-ribosylserine. Lys12 bears the N6-(beta-hydroxybutyryl)lysine; alternate mark. An N6-acetyllysine; alternate mark is found at Lys12 and Lys13. 2 positions are modified to N6-crotonyllysine; alternate: Lys12 and Lys13. Lys12 bears the N6-lactoyllysine; alternate mark. N6-(2-hydroxyisobutyryl)lysine; alternate is present on Lys13. Phosphoserine; by STK4/MST1 is present on Ser15. Lys16, Lys17, Lys21, and Lys24 each carry N6-acetyllysine; alternate. Lys16, Lys17, Lys21, and Lys24 each carry N6-crotonyllysine; alternate. Residues Lys16, Lys17, Lys21, and Lys24 each carry the N6-lactoyllysine; alternate modification. Residues Lys17 and Lys21 each carry the N6-(beta-hydroxybutyryl)lysine; alternate modification. An N6-glutaryllysine; alternate modification is found at Lys17. 2 positions are modified to N6-(2-hydroxyisobutyryl)lysine; alternate: Lys21 and Lys24. An N6-butyryllysine; alternate modification is found at Lys21. Lys21 is covalently cross-linked (Glycyl lysine isopeptide (Lys-Gly) (interchain with G-Cter in SUMO2); alternate). At Lys25 the chain carries N6-(2-hydroxyisobutyryl)lysine. Position 35 is an N6-(2-hydroxyisobutyryl)lysine; alternate (Lys35). Lys35 is modified (N6-(beta-hydroxybutyryl)lysine; alternate). Position 35 is an N6-crotonyllysine; alternate (Lys35). Lys35 carries the N6-glutaryllysine; alternate modification. Residue Lys35 is modified to N6-succinyllysine; alternate. Residue Lys35 forms a Glycyl lysine isopeptide (Lys-Gly) (interchain with G-Cter in ubiquitin); alternate linkage. At Glu36 the chain carries PolyADP-ribosyl glutamic acid. Position 37 is a phosphoserine; by AMPK (Ser37). N6-(2-hydroxyisobutyryl)lysine; alternate is present on residues Lys44, Lys47, and Lys58. Lys44 carries the post-translational modification N6-lactoyllysine; alternate. N6-glutaryllysine; alternate occurs at positions 44 and 47. Lys47 carries the N6-methyllysine; alternate modification. Lys58 is subject to N6,N6-dimethyllysine; alternate. Arg80 is subject to Dimethylated arginine. Position 86 is an N6-(2-hydroxyisobutyryl)lysine; alternate (Lys86). Lys86 is subject to N6-(beta-hydroxybutyryl)lysine; alternate. Lys86 is subject to N6-acetyllysine; alternate. At Lys86 the chain carries N6-lactoyllysine; alternate. Position 86 is an N6,N6,N6-trimethyllysine; alternate (Lys86). An omega-N-methylarginine mark is found at Arg87 and Arg93. Lys109 is subject to N6-(2-hydroxyisobutyryl)lysine; alternate. Lys109 is subject to N6-lactoyllysine; alternate. Lys109 is subject to N6-glutaryllysine; alternate. The residue at position 109 (Lys109) is an N6-methyllysine; alternate. The O-linked (GlcNAc) serine glycan is linked to Ser113. Thr116 carries the phosphothreonine modification. Lys117 and Lys121 each carry N6-(2-hydroxyisobutyryl)lysine; alternate. An N6-(beta-hydroxybutyryl)lysine; alternate mark is found at Lys117 and Lys121. An N6-lactoyllysine; alternate mark is found at Lys117 and Lys121. N6-glutaryllysine; alternate is present on residues Lys117 and Lys121. N6-succinyllysine; alternate is present on residues Lys117 and Lys121. An N6-malonyllysine; alternate modification is found at Lys117. Lys117 is subject to N6-methylated lysine; alternate. Lys121 is covalently cross-linked (Glycyl lysine isopeptide (Lys-Gly) (interchain with G-Cter in ubiquitin); alternate).

The protein belongs to the histone H2B family. As to quaternary structure, the nucleosome is a histone octamer containing two molecules each of H2A, H2B, H3 and H4 assembled in one H3-H4 heterotetramer and two H2A-H2B heterodimers. The octamer wraps approximately 147 bp of DNA. Monoubiquitination at Lys-35 (H2BK34Ub) by the MSL1/MSL2 dimer is required for histone H3 'Lys-4' (H3K4me) and 'Lys-79' (H3K79me) methylation and transcription activation at specific gene loci, such as HOXA9 and MEIS1 loci. Similarly, monoubiquitination at Lys-121 (H2BK120Ub) by the RNF20/40 complex gives a specific tag for epigenetic transcriptional activation and is also prerequisite for histone H3 'Lys-4' and 'Lys-79' methylation. It also functions cooperatively with the FACT dimer to stimulate elongation by RNA polymerase II. H2BK120Ub also acts as a regulator of mRNA splicing: deubiquitination by USP49 is required for efficient cotranscriptional splicing of a large set of exons. In terms of processing, phosphorylation at Ser-37 (H2BS36ph) by AMPK in response to stress promotes transcription. Phosphorylated on Ser-15 (H2BS14ph) by STK4/MST1 during apoptosis; which facilitates apoptotic chromatin condensation. Also phosphorylated on Ser-15 in response to DNA double strand breaks (DSBs), and in correlation with somatic hypermutation and immunoglobulin class-switch recombination. Post-translationally, glcNAcylation at Ser-113 promotes monoubiquitination of Lys-121. It fluctuates in response to extracellular glucose, and associates with transcribed genes. ADP-ribosylated by PARP1 or PARP2 on Ser-7 (H2BS6ADPr) in response to DNA damage. H2BS6ADPr promotes recruitment of CHD1L. Mono-ADP-ribosylated on Glu-3 (H2BE2ADPr) by PARP3 in response to single-strand breaks. Poly ADP-ribosylation on Glu-36 (H2BE35ADPr) by PARP1 regulates adipogenesis: it inhibits phosphorylation at Ser-37 (H2BS36ph), thereby blocking expression of pro-adipogenetic genes. In terms of processing, crotonylation (Kcr) is specifically present in male germ cells and marks testis-specific genes in post-meiotic cells, including X-linked genes that escape sex chromosome inactivation in haploid cells. Crotonylation marks active promoters and enhancers and confers resistance to transcriptional repressors. It is also associated with post-meiotically activated genes on autosomes. Post-translationally, lactylated in macrophages by EP300/P300 by using lactoyl-CoA directly derived from endogenous or exogenous lactate, leading to stimulates gene transcription.

The protein localises to the nucleus. Its subcellular location is the chromosome. Its function is as follows. Core component of nucleosome. Nucleosomes wrap and compact DNA into chromatin, limiting DNA accessibility to the cellular machineries which require DNA as a template. Histones thereby play a central role in transcription regulation, DNA repair, DNA replication and chromosomal stability. DNA accessibility is regulated via a complex set of post-translational modifications of histones, also called histone code, and nucleosome remodeling. In terms of biological role, has broad antibacterial activity. May contribute to the formation of the functional antimicrobial barrier of the colonic epithelium, and to the bactericidal activity of amniotic fluid. This Homo sapiens (Human) protein is Histone H2B type F-S.